The sequence spans 189 residues: Glycerol-3-phosphate acyltransferase (189 aa).

5 helical membrane-spanning segments follow: residues 1-21 (MVWLLAILAYLLGSLSFAVLL), 50-70 (KLAILTLLGDVGKGLLPVLVA), 72-92 (WLGLGVMEEAWVGIAAVIGHL), 111-131 (MLLGLYPPAVLLAAAAWLLTF), and 151-171 (LLAWQQPGALLPMTVLTALIV).

It belongs to the PlsY family. In terms of assembly, probably interacts with PlsX.

It localises to the cell inner membrane. The enzyme catalyses an acyl phosphate + sn-glycerol 3-phosphate = a 1-acyl-sn-glycero-3-phosphate + phosphate. It participates in lipid metabolism; phospholipid metabolism. Functionally, catalyzes the transfer of an acyl group from acyl-phosphate (acyl-PO(4)) to glycerol-3-phosphate (G3P) to form lysophosphatidic acid (LPA). This enzyme utilizes acyl-phosphate as fatty acyl donor, but not acyl-CoA or acyl-ACP. The polypeptide is Glycerol-3-phosphate acyltransferase (Pseudomonas paraeruginosa (strain DSM 24068 / PA7) (Pseudomonas aeruginosa (strain PA7))).